The following is a 201-amino-acid chain: Musculin (201 aa).

Disordered stretches follow at residues 1–108 (MSTG…NAAN) and 182–201 (RPDSDSKDVSAANRLCGTSA). The segment covering 46–56 (SAEEEDGEEEP) has biased composition (acidic residues). Positions 66 to 71 (KRKRLR) match the Nuclear localization signal motif. A compositionally biased stretch (gly residues) spans 74 to 86 (DAGGAGGRAGGAG). A bHLH domain is found at 102–154 (SQRNAANARERARMRVLSKAFSRLKTSLPWVPPDTKLSKLDTLRLASSYIAHL).

As to quaternary structure, efficient DNA binding requires dimerization with another bHLH protein. Binds DNA as a homodimer or a heterodimer. Forms a heterodimer with TCF3.

The protein resides in the nucleus. Functionally, transcription repressor that blocks myogenesis and activation of E-box dependent muscle genes. This is Musculin (Msc) from Mus musculus (Mouse).